The chain runs to 2443 residues: Non-reducing polyketide synthase olcA (2443 aa).

The region spanning I5–S442 is the Ketosynthase family 3 (KS3) domain. Catalysis depends on for beta-ketoacyl synthase activity residues C178, H317, and H362. Positions G550 to L885 are malonyl-CoA:ACP transacylase (MAT) domain. The For acyl/malonyl transferase activity role is filled by S645. Residues N940–A1070 form an N-terminal hotdog fold region. Residues N940–D1231 enclose the PKS/mFAS DH domain. The interval A989–R1497 is product template (PT) domain. The segment at M1085 to D1231 is C-terminal hotdog fold. The tract at residues N1771–P2159 is methyltransferase (CMeT) domain. The region spanning E2359 to L2434 is the Carrier domain. Position 2394 is an O-(pantetheine 4'-phosphoryl)serine (S2394).

It carries out the reaction nicotinyl-CoA + 2 malonyl-CoA + H(+) = 4-hydroxy-6-(pyridin-3-yl)-2H-pyran-2-one + 2 CO2 + 3 CoA. The protein operates within secondary metabolite biosynthesis; terpenoid biosynthesis. Functionally, non-reducing polyketide synthase; part of the gene cluster that mediates the biosynthesis of 15-deoxyoxalicine B. The first step of the pathway is the synthesis of nicotinyl-CoA from nicotinic acid by the nicotinic acid-CoA ligase olcI. Nicotinyl-CoA is then a substrate of polyketide synthase olcA to produce 4-hydroxy-6-(3-pyridinyl)-2H-pyran-2-one (HPPO) which is further prenylated by the polyprenyl transferase olcH to yield geranylgeranyl-HPPO. Geranylgeranyl pyrophosphate is provided by the cluster-specific geranylgeranyl pyrophosphate synthase olcC. The FAD-dependent monooxygenase olcE catalyzes the epoxidation of geranylgeranyl-HPPO and the terpene cyclase olcD catalyzes the cyclization of the terpenoid component, resulting in the formation of the tricyclic terpene moiety seen in predecaturin E. The cytochrome P450 monooxygenase then catalyzes the allylic oxidation of predecaturin E, which is followed by spirocylization with concomitant loss of one molecule of water to form decaturin E. Decaturin E is the substrate of the cytochrome P450 monooxygenase olcJ which hydroxylates it at the C-29 position to form decaturin F. The short-chain dehydrogenase/reductase olcF may catalyze the oxidation of decaturin F to generate the 29-hydroxyl-27-one intermediate, and subsequent hemiacetal formation probably leads to the formation of decaturin C. The dioxygenase olcK may be a peroxisomal enzyme that catalyzes the hydroxylation of decaturin C into decaturin A once decaturin C is shuttled into the peroxisome by the MFS transporter olcL. Finally the cytochrome P450 monooxygenase olcB catalyzes the oxidative rearrangement to yield 15-deoxyoxalicine B. In the absence of olcJ, decaturin E may be shunted to a pathway in which it is oxidized to a ketone, possibly by olcF, to form decaturin D, which undergoes further allylic oxidation to yield decaturin G. Moreover, in the absence of oclK or oclL, oclB can convert decaturin C into 15-deoxyoxalicine A. The chain is Non-reducing polyketide synthase olcA from Penicillium canescens.